We begin with the raw amino-acid sequence, 132 residues long: Small ribosomal subunit protein uS8 (132 aa).

It belongs to the universal ribosomal protein uS8 family. As to quaternary structure, part of the 30S ribosomal subunit. Contacts proteins S5 and S12.

Functionally, one of the primary rRNA binding proteins, it binds directly to 16S rRNA central domain where it helps coordinate assembly of the platform of the 30S subunit. In Streptococcus gordonii (strain Challis / ATCC 35105 / BCRC 15272 / CH1 / DL1 / V288), this protein is Small ribosomal subunit protein uS8.